Reading from the N-terminus, the 376-residue chain is Chaperone protein DnaJ (376 aa).

A J domain is found at 4–70 (DYYQILGVSK…QKRAAYDRFG (67 aa)). The CR-type zinc-finger motif lies at 139–217 (GVEKNISFSS…CHGLGRYHKQ (79 aa)). The Zn(2+) site is built by Cys152, Cys155, Cys169, Cys172, Cys191, Cys194, Cys205, and Cys208. CXXCXGXG motif repeat units follow at residues 152 to 159 (CDTCHGSG), 169 to 176 (CDACGGVG), 191 to 198 (CHKCQGNG), and 205 to 212 (CKKCHGLG).

It belongs to the DnaJ family. Homodimer. It depends on Zn(2+) as a cofactor.

Its subcellular location is the cytoplasm. Participates actively in the response to hyperosmotic and heat shock by preventing the aggregation of stress-denatured proteins and by disaggregating proteins, also in an autonomous, DnaK-independent fashion. Unfolded proteins bind initially to DnaJ; upon interaction with the DnaJ-bound protein, DnaK hydrolyzes its bound ATP, resulting in the formation of a stable complex. GrpE releases ADP from DnaK; ATP binding to DnaK triggers the release of the substrate protein, thus completing the reaction cycle. Several rounds of ATP-dependent interactions between DnaJ, DnaK and GrpE are required for fully efficient folding. Also involved, together with DnaK and GrpE, in the DNA replication of plasmids through activation of initiation proteins. This is Chaperone protein DnaJ from Rickettsia bellii (strain RML369-C).